The sequence spans 174 residues: Gamma-crystallin M3 (174 aa).

Beta/gamma crystallin 'Greek key' domains lie at glycine 2 to serine 40 and glycine 41 to proline 82. The segment at glutamine 83–proline 87 is connecting peptide. 2 Beta/gamma crystallin 'Greek key' domains span residues tyrosine 88–aspartate 128 and glycine 129–methionine 171.

Belongs to the beta/gamma-crystallin family. In terms of assembly, monomer.

Crystallins are the dominant structural components of the vertebrate eye lens. In Cyprinus carpio (Common carp), this protein is Gamma-crystallin M3.